The following is a 798-amino-acid chain: Galactinol--sucrose galactosyltransferase (798 aa).

It belongs to the glycosyl hydrolases 36 family.

It catalyses the reaction alpha-D-galactosyl-(1-&gt;3)-1D-myo-inositol + sucrose = raffinose + myo-inositol. Inhibited by 1-deoxygalactonojirimycin. Not inhibited by stachyose. Strong inhibition of the hydrolytic activity by sucrose. Transglycosidase operating by a ping-pong reaction mechanism. Involved in the synthesis of raffinose, a major soluble carbohydrate in seeds, roots and tubers. Able to utilize D-ononitol and D-pinitol as acceptors. May also act as a glycoside hydrolase. The polypeptide is Galactinol--sucrose galactosyltransferase (RFS) (Pisum sativum (Garden pea)).